A 313-amino-acid polypeptide reads, in one-letter code: Transcription initiation factor IIB 2 (313 aa).

The segment at 13–44 (APKRCPECHSEHLIRDYEHGELICADCGAVIE) adopts a TFIIB-type zinc-finger fold. 4 residues coordinate Zn(2+): C17, C20, C36, and C39. Repeat copies occupy residues 130-213 (QLLN…AKEL) and 224-305 (SYIA…EISK).

Belongs to the TFIIB family.

Stabilizes TBP binding to an archaeal box-A promoter. Also responsible for recruiting RNA polymerase II to the pre-initiation complex (DNA-TBP-TFIIB). This is Transcription initiation factor IIB 2 from Thermoplasma volcanium (strain ATCC 51530 / DSM 4299 / JCM 9571 / NBRC 15438 / GSS1).